We begin with the raw amino-acid sequence, 181 residues long: ATP synthase subunit delta (181 aa).

Belongs to the ATPase delta chain family. In terms of assembly, F-type ATPases have 2 components, F(1) - the catalytic core - and F(0) - the membrane proton channel. F(1) has five subunits: alpha(3), beta(3), gamma(1), delta(1), epsilon(1). F(0) has three main subunits: a(1), b(2) and c(10-14). The alpha and beta chains form an alternating ring which encloses part of the gamma chain. F(1) is attached to F(0) by a central stalk formed by the gamma and epsilon chains, while a peripheral stalk is formed by the delta and b chains.

It is found in the cell membrane. In terms of biological role, f(1)F(0) ATP synthase produces ATP from ADP in the presence of a proton or sodium gradient. F-type ATPases consist of two structural domains, F(1) containing the extramembraneous catalytic core and F(0) containing the membrane proton channel, linked together by a central stalk and a peripheral stalk. During catalysis, ATP synthesis in the catalytic domain of F(1) is coupled via a rotary mechanism of the central stalk subunits to proton translocation. Functionally, this protein is part of the stalk that links CF(0) to CF(1). It either transmits conformational changes from CF(0) to CF(1) or is implicated in proton conduction. This Shouchella clausii (strain KSM-K16) (Alkalihalobacillus clausii) protein is ATP synthase subunit delta.